The sequence spans 41 residues: Pi-stichotoxin-Hmg5c (41 aa).

Intrachain disulfides connect C4/C37, C6/C30, and C20/C38.

It belongs to the sea anemone type 3 (BDS) potassium channel toxin family.

The protein resides in the secreted. It localises to the nematocyst. In terms of biological role, toxin with different activities on acid-sensing ion channels (ASIC) and nicotinic acetylcholine receptors. Is able to bind T.californica muscle-type nicotinic acetylcholine receptors (nAChR) (alpha-1-beta-1-delta-epsilon (CHRNA1-CHRNB1-CHRND-CHRNE)), and human alpha-7/CHRNA7 nicotinic acetylcholine receptors. Weakly and reversibly inhibits rat homomeric ASIC1 (isoform ASIC1a) (IC(50)=1.25 uM), while it potentiates rat homomeric ASIC3 (EC(50)=1.53 uM). Rat ASIC1a current inhibition is not complete, and reaches a maximum of 86% inhibition. On rat ASIC3, does not activate the channel itself, but produces a remarkable potentiation of the transient current resulting from the acidic pulse. At the maximal applied concentration, elicits responses that are twice as high as those produced by extracellular protons. Surprisingly, shows a different activity on human ASIC3. On the truncated human ASIC3 (ASIC3-D20), the toxin weakly inhibits the channel. Molecular modeling interaction with rat ASIC1a suggests that it hinders the collapse of acidic pockets and stabilizes nonconducting channels state. In vivo, causes an anxiolytic effect on mouse behavior. Also shows an analgesic activity in an acid-induced muscle pain model, and important anti-inflammatory effect in models of acute local inflammation. The chain is Pi-stichotoxin-Hmg5c from Heteractis magnifica (Magnificent sea anemone).